The chain runs to 88 residues: Large ribosomal subunit protein bL31B (88 aa).

It belongs to the bacterial ribosomal protein bL31 family. Type B subfamily. In terms of assembly, part of the 50S ribosomal subunit.

This is Large ribosomal subunit protein bL31B from Glaesserella parasuis serovar 5 (strain SH0165) (Haemophilus parasuis).